A 626-amino-acid polypeptide reads, in one-letter code: MTKQEKAINLSESAQVDQQSVQPFPRSRKVYVEGSRPDIRVPMREISLDDTPTDFGGESNAPVLVYDTSGPYTDPDVIIDVRKGLADVRSAWIEARGDTERLEGLSSDFGQQRLNDAELAKLRFAHVRNPRRAKAGANVSQMHYARQGIITAEMEYVAIRENMKLQEARAAGLLNEQHAGHSFGANIPKEITPEFVRQEIARGRAIIPANINHPEVEPMIIGRNFLVKINGNIGNSALGSSIEEEVAKLTWGIRWGSDTVMDLSTGKHIHETREWIIRNSPVPIGTVPIYQALEKVNGVAEDLTWELFRDTLIEQAEQGVDYFTIHAGVLLRYVPLTAKRVTGIVSRGGSIMAKWCLAHHKENFLYTHFDEICEIMKAYDVSFSLGDGLRPGSIADANDAAQFGELETLGELTKIAWKHDVQCMIEGPGHVPMQLIKENMDKQLECCDEAPFYTLGPLTTDIAPGYDHITSGIGAAMIGWFGCAMLCYVTPKEHLGLPNKDDVKTGIITYKIAAHAADLAKGHPGAQIRDNALSKARFEFRWEDQFNLGLDPDTARAFHDETLPKESAKVAHFCSMCGPKFCSMKITQEVREYAAKIEAVDVTVEQGMREQAERFRQEGSQLYHKV.

Residues 1–22 (MTKQEKAINLSESAQVDQQSVQ) form a disordered region. Residues 10-22 (LSESAQVDQQSVQ) show a composition bias toward polar residues. Substrate is bound by residues Asn232, Met261, Tyr290, His326, 346–348 (SRG), 387–390 (DGLR), and Glu426. A Zn(2+)-binding site is contributed by His430. Tyr453 is a substrate binding site. His494 contacts Zn(2+). Residues Cys574, Cys577, and Cys582 each coordinate [4Fe-4S] cluster.

This sequence belongs to the ThiC family. As to quaternary structure, homodimer. The cofactor is [4Fe-4S] cluster.

It carries out the reaction 5-amino-1-(5-phospho-beta-D-ribosyl)imidazole + S-adenosyl-L-methionine = 4-amino-2-methyl-5-(phosphooxymethyl)pyrimidine + CO + 5'-deoxyadenosine + formate + L-methionine + 3 H(+). It participates in cofactor biosynthesis; thiamine diphosphate biosynthesis. Functionally, catalyzes the synthesis of the hydroxymethylpyrimidine phosphate (HMP-P) moiety of thiamine from aminoimidazole ribotide (AIR) in a radical S-adenosyl-L-methionine (SAM)-dependent reaction. This chain is Phosphomethylpyrimidine synthase, found in Pseudomonas putida (strain ATCC 700007 / DSM 6899 / JCM 31910 / BCRC 17059 / LMG 24140 / F1).